The sequence spans 1634 residues: Protein TIC 214 (1634 aa).

5 helical membrane passes run 25-45 (FIIGQFIRFISIYYAPLYVAL), 53-73 (ILALPYLLIHLFWNTDKSFFA), 94-116 (HFILQLLNSCILPNSTLARLITI), 133-153 (FAWFIGQIFMLNSFELVLVWI), and 172-192 (IFVILFNCLFGSLLFILSIQC). Disordered stretches follow at residues 216–242 (RERLQSEEERDVEKKKPDYKLPDSESE) and 1365–1395 (QQKSETDSETDSQQKNIAETQKYLEEDSTKS). Basic and acidic residues predominate over residues 1386 to 1395 (KYLEEDSTKS).

Belongs to the TIC214 family. In terms of assembly, part of the Tic complex.

The protein resides in the plastid. It localises to the chloroplast inner membrane. Involved in protein precursor import into chloroplasts. May be part of an intermediate translocation complex acting as a protein-conducting channel at the inner envelope. This is Protein TIC 214 from Cuscuta exaltata (Tall dodder).